The primary structure comprises 168 residues: UPF0478 protein SH1183 (168 aa).

A helical membrane pass occupies residues 7 to 27; sequence IAGIIAAIAFLVLCIGIVVVL. A disordered region spans residues 144 to 168; the sequence is YRNTSVGNDANHSNENYTTNVEKNF.

It belongs to the UPF0478 family.

It is found in the cell membrane. The protein is UPF0478 protein SH1183 of Staphylococcus haemolyticus (strain JCSC1435).